A 367-amino-acid polypeptide reads, in one-letter code: Phosphoribosylaminoimidazole-succinocarboxamide synthase (367 aa).

It belongs to the SAICAR synthetase family.

The enzyme catalyses 5-amino-1-(5-phospho-D-ribosyl)imidazole-4-carboxylate + L-aspartate + ATP = (2S)-2-[5-amino-1-(5-phospho-beta-D-ribosyl)imidazole-4-carboxamido]succinate + ADP + phosphate + 2 H(+). The protein operates within purine metabolism; IMP biosynthesis via de novo pathway; 5-amino-1-(5-phospho-D-ribosyl)imidazole-4-carboxamide from 5-amino-1-(5-phospho-D-ribosyl)imidazole-4-carboxylate: step 1/2. In Shewanella pealeana (strain ATCC 700345 / ANG-SQ1), this protein is Phosphoribosylaminoimidazole-succinocarboxamide synthase.